We begin with the raw amino-acid sequence, 53 residues long: ATP synthase protein 8 (53 aa).

Residues 4-24 (MAPISWLLLFIVFSITFILFC) form a helical membrane-spanning segment.

It belongs to the ATPase protein 8 family. As to quaternary structure, F-type ATPases have 2 components, CF(1) - the catalytic core - and CF(0) - the membrane proton channel.

It is found in the mitochondrion membrane. In terms of biological role, mitochondrial membrane ATP synthase (F(1)F(0) ATP synthase or Complex V) produces ATP from ADP in the presence of a proton gradient across the membrane which is generated by electron transport complexes of the respiratory chain. F-type ATPases consist of two structural domains, F(1) - containing the extramembraneous catalytic core and F(0) - containing the membrane proton channel, linked together by a central stalk and a peripheral stalk. During catalysis, ATP synthesis in the catalytic domain of F(1) is coupled via a rotary mechanism of the central stalk subunits to proton translocation. Part of the complex F(0) domain. Minor subunit located with subunit a in the membrane. The sequence is that of ATP synthase protein 8 (mt:ATPase8) from Drosophila yakuba (Fruit fly).